The following is a 500-amino-acid chain: NF-kappa-B inhibitor cactus (500 aa).

Over residues 1–43 the composition is skewed to low complexity; that stretch reads MPSPTKAAEAATKATATSDCSCSAASVEQRAPSNAANPSSSLA. 2 disordered regions span residues 1–148 and 171–212; these read MPSP…MRLK and LNNL…APPS. Ser-45 carries the post-translational modification Phosphoserine; by PKC. Polar residues predominate over residues 69-86; sequence NETSDSGFISGPQSSQIF. Acidic residues predominate over residues 118–130; that stretch reads IIDEEEDQEEQEK. At Ser-144 the chain carries Phosphoserine; by PKC. The span at 171–189 shows a compositional bias: polar residues; it reads LNNLGQSSSTQITGRSKVQ. Phosphothreonine; by PKC is present on Thr-183. Low complexity predominate over residues 190–212; it reads SSTASTANANPSGSGATSSAPPS. ANK repeat units follow at residues 229–261, 265–294, 298–327, 361–390, and 395–424; these read DGDT…LLNI, VAQT…EPTV, HGNT…ATEI, DGER…DINA, and SGRT…KLNL. Phosphothreonine; by PKC occurs at positions 293 and 319. The residue at position 395 (Ser-395) is a Phosphoserine; by PKC.

The protein belongs to the NF-kappa-B inhibitor family. As to quaternary structure, phosphorylated isoform A binds to dorsal (dl); inhibits dl translocation to the nucleus and therefore from binding to DNA. In vitro, interacts with IKKbeta. Interacts with cactin and kappa-B-Ras. Activated IKKbeta phosphorylates cact. As to expression, expressed in ovary (at protein level).

It is found in the cytoplasm. Its function is as follows. Involved in the formation of the dorsoventral pattern. It inhibits nuclear translocation of the dorsal morphogen in the dorsal region of the embryo. Acts as a negative regulator of the NF-kappa-B (rel) signaling pathway. Cact is degraded by IKKbeta, this is essential for NF-kappa-B (rel) activation. The sequence is that of NF-kappa-B inhibitor cactus (cact) from Drosophila melanogaster (Fruit fly).